The sequence spans 304 residues: Acetyl-coenzyme A carboxylase carboxyl transferase subunit beta (304 aa).

Residues 52-304 (EVTKCPSCGV…TIFKVLNDII (253 aa)) form the CoA carboxyltransferase N-terminal domain. Residues C56, C59, C75, and C78 each contribute to the Zn(2+) site. The C4-type zinc-finger motif lies at 56–78 (CPSCGVLSHKSEIRANMKMCSNC).

It belongs to the AccD/PCCB family. In terms of assembly, acetyl-CoA carboxylase is a heterohexamer composed of biotin carboxyl carrier protein (AccB), biotin carboxylase (AccC) and two subunits each of ACCase subunit alpha (AccA) and ACCase subunit beta (AccD). The cofactor is Zn(2+).

The protein resides in the cytoplasm. The catalysed reaction is N(6)-carboxybiotinyl-L-lysyl-[protein] + acetyl-CoA = N(6)-biotinyl-L-lysyl-[protein] + malonyl-CoA. Its pathway is lipid metabolism; malonyl-CoA biosynthesis; malonyl-CoA from acetyl-CoA: step 1/1. Functionally, component of the acetyl coenzyme A carboxylase (ACC) complex. Biotin carboxylase (BC) catalyzes the carboxylation of biotin on its carrier protein (BCCP) and then the CO(2) group is transferred by the transcarboxylase to acetyl-CoA to form malonyl-CoA. The polypeptide is Acetyl-coenzyme A carboxylase carboxyl transferase subunit beta (Fusobacterium nucleatum subsp. nucleatum (strain ATCC 25586 / DSM 15643 / BCRC 10681 / CIP 101130 / JCM 8532 / KCTC 2640 / LMG 13131 / VPI 4355)).